Here is a 229-residue protein sequence, read N- to C-terminus: Potassium/proton antiporter CemA (229 aa).

4 helical membrane passes run 7 to 27, 106 to 126, 154 to 174, and 189 to 209; these read FIPF…YLSF, MILH…YSIL, ILLV…ELLI, and IISS…KYWI.

The protein belongs to the CemA family.

The protein resides in the plastid. The protein localises to the chloroplast inner membrane. The enzyme catalyses K(+)(in) + H(+)(out) = K(+)(out) + H(+)(in). Functionally, contributes to K(+)/H(+) antiport activity by supporting proton efflux to control proton extrusion and homeostasis in chloroplasts in a light-dependent manner to modulate photosynthesis. Prevents excessive induction of non-photochemical quenching (NPQ) under continuous-light conditions. Indirectly promotes efficient inorganic carbon uptake into chloroplasts. The polypeptide is Potassium/proton antiporter CemA (Spinacia oleracea (Spinach)).